The primary structure comprises 903 residues: Protein translocase subunit SecA (903 aa).

ATP-binding positions include Gln89, 107–111 (GEGKT), and Asp502. The Zn(2+) site is built by Cys887, Cys889, Cys898, and His899.

Belongs to the SecA family. As to quaternary structure, monomer and homodimer. Part of the essential Sec protein translocation apparatus which comprises SecA, SecYEG and auxiliary proteins SecDF-YajC and YidC. It depends on Zn(2+) as a cofactor.

The protein localises to the cell inner membrane. It is found in the cytoplasm. The enzyme catalyses ATP + H2O + cellular proteinSide 1 = ADP + phosphate + cellular proteinSide 2.. Its function is as follows. Part of the Sec protein translocase complex. Interacts with the SecYEG preprotein conducting channel. Has a central role in coupling the hydrolysis of ATP to the transfer of proteins into and across the cell membrane, serving both as a receptor for the preprotein-SecB complex and as an ATP-driven molecular motor driving the stepwise translocation of polypeptide chains across the membrane. The polypeptide is Protein translocase subunit SecA (Jannaschia sp. (strain CCS1)).